The following is a 513-amino-acid chain: ATP synthase subunit alpha (513 aa).

ATP is bound at residue 169–176 (GDRQTGKT).

This sequence belongs to the ATPase alpha/beta chains family. As to quaternary structure, F-type ATPases have 2 components, CF(1) - the catalytic core - and CF(0) - the membrane proton channel. CF(1) has five subunits: alpha(3), beta(3), gamma(1), delta(1), epsilon(1). CF(0) has three main subunits: a(1), b(2) and c(9-12). The alpha and beta chains form an alternating ring which encloses part of the gamma chain. CF(1) is attached to CF(0) by a central stalk formed by the gamma and epsilon chains, while a peripheral stalk is formed by the delta and b chains.

It is found in the cell inner membrane. It catalyses the reaction ATP + H2O + 4 H(+)(in) = ADP + phosphate + 5 H(+)(out). In terms of biological role, produces ATP from ADP in the presence of a proton gradient across the membrane. The alpha chain is a regulatory subunit. This chain is ATP synthase subunit alpha, found in Hydrogenovibrio crunogenus (strain DSM 25203 / XCL-2) (Thiomicrospira crunogena).